An 863-amino-acid polypeptide reads, in one-letter code: Receptor-like protein 9DC1 (863 aa).

The N-terminal stretch at 1–21 (MGCVKLVFFMLYVFLFQLVSS) is a signal peptide. Over 22-812 (SSLPHLCPED…EEDSPMISWQ (791 aa)) the chain is Extracellular. An N-cap region spans residues 24-90 (LPHLCPEDQA…GVHCDETTGQ (67 aa)). N-linked (GlcNAc...) asparagine glycans are attached at residues Asn-71 and Asn-108. An LRR 1; degenerate repeat occupies 91–114 (VIALDLRCSQLQGKFHSNSSLFQL). LRR repeat units lie at residues 115–138 (SNLKRLDLSNNNFIGSLISPKFGE) and 140–163 (SDLTHLDLSDSSFTGVIPSEISHL). The stretch at 164–190 (SKLHVLLIGDQYGLSIVPHNFEPLLKN) is one LRR 4; degenerate repeat. N-linked (GlcNAc...) asparagine glycans are attached at residues Asn-190, Asn-203, and Asn-211. LRR repeat units lie at residues 191–213 (LTQLRELNLYEVNLSSTVPSNFS), 214–237 (SHLTTLQLSGTGLRGLLPERVFHL), 240–262 (LEFLDLSYNSQLMVRFPTTKWNS), 264–286 (ASLMKLYVHSVNIADRIPESFSH), 287–311 (LTSLHELDMGYTNLSGPIPKPLWNL), and 312–336 (TNIESLDLRYNHLEGPIPQLPIFEK). An N-linked (GlcNAc...) asparagine glycan is attached at Asn-261. N-linked (GlcNAc...) asparagine glycans are attached at residues Asn-299 and Asn-310. The LRR 11; degenerate repeat unit spans residues 337-357 (LKKLSLFRNDNLDGGLEFLSF). LRR repeat units follow at residues 358-382 (NTQLERLDLSSNSLTGPIPSNISGL), 383-406 (QNLECLYLSSNHLNGSIPSWIFSL), 408-428 (SLVELDLSNNTFSGKIQEFKS), 429-452 (KTLSAVTLKQNKLKGRIPNSLLNQ), 454-476 (NLQLLLLSHNNISGHISSAICNL), 477-500 (KTLILLDLGSNNLEGTIPQCVVER), 502-524 (EYLSHLDLSKNRLSGTINTTFSV), 525-549 (GNILRVISLHGNKLTGKVPRSMINC), 551-572 (YLTLLDLGNNMLNDTFPNWLGY), 573-597 (LFQLKILSLRSNKLHGPIKSSGNTN), 599-623 (FMGLQILDLSSNGFSGNLPERILGN), 667-690 (LDSNMIINLSKNRFEGHIPSIIGD), 691-714 (LVGLRTLNLSHNVLEGHIPASFQN), 715-739 (LSVLESLDLSSNKISGEIPQQLASL), and 741-759 (FLEVLNLSHNHLVGCIPKG). N-linked (GlcNAc...) asparagine glycosylation is found at Asn-378, Asn-396, and Asn-416. Asn-464 is a glycosylation site (N-linked (GlcNAc...) asparagine). Residue Asn-519 is glycosylated (N-linked (GlcNAc...) asparagine). Residue Asn-563 is glycosylated (N-linked (GlcNAc...) asparagine). 3 N-linked (GlcNAc...) asparagine glycosylation sites follow: Asn-674, Asn-698, and Asn-714. N-linked (GlcNAc...) asparagine glycans are attached at residues Asn-746 and Asn-767. Residues 760–812 (KQFDSFGNTSYQGNDGLRGFPLSKLCGGEDQVTTPAELDQEEEEEDSPMISWQ) form a C-cap/acidic domain region. A helical transmembrane segment spans residues 813-833 (GVLVGYGCGLVIGLSVIYIMW). The Cytoplasmic segment spans residues 834-863 (STQYPAWFSRMDLKLEHIITTKMKKHKKRY).

It belongs to the RLP family.

Its subcellular location is the cell membrane. Its function is as follows. Involved in plant defense. Confers resistance to the fungal pathogen C.fulvum through recognition of the AVR9 elicitor protein. This is Receptor-like protein 9DC1 from Solanum pimpinellifolium (Currant tomato).